We begin with the raw amino-acid sequence, 33 residues long: Gaegurin-3 (33 aa).

The cysteines at positions 27 and 33 are disulfide-linked.

The protein belongs to the frog skin active peptide (FSAP) family. Brevinin subfamily. In terms of assembly, monomer. As to expression, expressed by the skin glands.

The protein resides in the secreted. Has a non-hemolytic activity. Has a broad spectrum of activity against both Gram-positive and Gram-negative bacteria, fungi and protozoa. The sequence is that of Gaegurin-3 (GGN3) from Glandirana rugosa (Japanese wrinkled frog).